Reading from the N-terminus, the 690-residue chain is Long-chain fatty acid transport protein 5 (690 aa).

Residues 1 to 30 (MGVRQQLALLLLLLLLLWGLGQPVWPVAVA) are Cytoplasmic-facing. A run of 2 helical transmembrane segments spans residues 31 to 51 (LTLR…LAML) and 56 to 76 (LGPW…LTLL). Residues 77 to 690 (PARLPPGLRW…QAVCEGTWRL (614 aa)) are Cytoplasmic-facing. 292–303 (FIYTSGTTGLPK) is a binding site for AMP. Residue serine 501 is modified to Phosphoserine.

Belongs to the ATP-dependent AMP-binding enzyme family. Predominantly expressed in liver.

The protein resides in the endoplasmic reticulum membrane. It is found in the microsome. The protein localises to the cell membrane. The enzyme catalyses a fatty acid(in) = a fatty acid(out). The catalysed reaction is cholate + ATP + CoA = choloyl-CoA + AMP + diphosphate. It carries out the reaction chenodeoxycholate + ATP + CoA = chenodeoxycholoyl-CoA + AMP + diphosphate. It catalyses the reaction deoxycholate + ATP + CoA = deoxycholoyl-CoA + AMP + diphosphate. The enzyme catalyses lithocholate + ATP + CoA = lithocholoyl-CoA + AMP + diphosphate. The catalysed reaction is (25R)-3alpha,7alpha,12alpha-trihydroxy-5beta-cholestan-26-oate + ATP + CoA = (25R)-3alpha,7alpha,12alpha-trihydroxy-5beta-cholestan-26-oyl-CoA + AMP + diphosphate. It carries out the reaction a very long-chain fatty acid + ATP + CoA = a very long-chain fatty acyl-CoA + AMP + diphosphate. It catalyses the reaction tetracosanoate + ATP + CoA = tetracosanoyl-CoA + AMP + diphosphate. The enzyme catalyses hexacosanoate + ATP + CoA = hexacosanoyl-CoA + AMP + diphosphate. The catalysed reaction is a long-chain fatty acid + ATP + CoA = a long-chain fatty acyl-CoA + AMP + diphosphate. It carries out the reaction octadecanoate + ATP + CoA = octadecanoyl-CoA + AMP + diphosphate. It catalyses the reaction eicosanoate + ATP + CoA = eicosanoyl-CoA + AMP + diphosphate. With respect to regulation, 3-alpha,7-alpha,12-alpha-trihydroxy-5-beta-cholestanate (THCA) inhibits the activation of cholate. In terms of biological role, may mediate the import of long-chain fatty acids (LCFA) by facilitating their transport across cell membranes. Also catalyzes the ATP-dependent formation of fatty acyl-CoA using LCFA and very-long-chain fatty acids (VLCFA) as substrates. Mainly functions as a bile acyl-CoA synthetase catalyzing the activation of bile acids via ATP-dependent formation of bile acid CoA thioesters which is necessary for their subsequent conjugation with glycine or taurine. Both primary bile acids (cholic acid and chenodeoxycholic acid) and secondary bile acids (deoxycholic acid and lithocholic acid) are the principal substrates. In vitro, activates 3-alpha,7-alpha,12-alpha-trihydroxy-5-beta-cholestanate ((25R)-3alpha,7alpha,12alpha-trihydroxy-5beta-cholestan-26-oate or THCA), the C27 precursor of cholic acid deriving from the de novo synthesis from cholesterol. Plays an important role in hepatic fatty acid uptake and bile acid reconjugation and recycling but not in de novo synthesis of bile acids. This is Long-chain fatty acid transport protein 5 (SLC27A5) from Homo sapiens (Human).